A 261-amino-acid chain; its full sequence is 5-oxoprolinase subunit A (261 aa).

The protein belongs to the LamB/PxpA family. Forms a complex composed of PxpA, PxpB and PxpC.

The catalysed reaction is 5-oxo-L-proline + ATP + 2 H2O = L-glutamate + ADP + phosphate + H(+). In terms of biological role, catalyzes the cleavage of 5-oxoproline to form L-glutamate coupled to the hydrolysis of ATP to ADP and inorganic phosphate. This is 5-oxoprolinase subunit A from Symbiobacterium thermophilum (strain DSM 24528 / JCM 14929 / IAM 14863 / T).